The following is a 251-amino-acid chain: 2,3-bisphosphoglycerate-dependent phosphoglycerate mutase (251 aa).

Substrate contacts are provided by residues 13 to 20, 26 to 27, R65, 92 to 95, K103, 119 to 120, and 186 to 187; these read RHGESEWN, TG, ERHY, RR, and GN. H14 (tele-phosphohistidine intermediate) is an active-site residue. E92 (proton donor/acceptor) is an active-site residue.

The protein belongs to the phosphoglycerate mutase family. BPG-dependent PGAM subfamily.

The catalysed reaction is (2R)-2-phosphoglycerate = (2R)-3-phosphoglycerate. The protein operates within carbohydrate degradation; glycolysis; pyruvate from D-glyceraldehyde 3-phosphate: step 3/5. In terms of biological role, catalyzes the interconversion of 2-phosphoglycerate and 3-phosphoglycerate. The polypeptide is 2,3-bisphosphoglycerate-dependent phosphoglycerate mutase (Rhodococcus opacus (strain B4)).